The following is a 121-amino-acid chain: Basic phospholipase A2 homolog textilotoxin B chain (121 aa).

7 cysteine pairs are disulfide-bonded: Cys-11–Cys-72, Cys-27–Cys-120, Cys-29–Cys-45, Cys-44–Cys-101, Cys-51–Cys-94, Cys-61–Cys-87, and Cys-80–Cys-92.

Belongs to the phospholipase A2 family. Group I subfamily. N49 sub-subfamily. As to quaternary structure, heterohexamer. 2 forms exist: 2 A or 2 B chains, 2 C chains and 2 covalently-linked D chains, and 1 A or 1 B, 1 C, 2 covalently-linked D chains and 2 differentially glycosylated covalently-linked D chains. Textilotoxin was originally described as pentameric. Expressed by the venom gland.

Its subcellular location is the secreted. Functionally, snake venom oligomeric phospholipase A2 that has potent presynaptic neurotoxicity. Chain B is not itself neurotoxic, but it is essential for the neurotoxicity of textilotoxin. Subunit B possesses a very low phospholipase activity. This Pseudonaja textilis (Eastern brown snake) protein is Basic phospholipase A2 homolog textilotoxin B chain.